The following is a 700-amino-acid chain: Glycine--tRNA ligase beta subunit (700 aa).

It belongs to the class-II aminoacyl-tRNA synthetase family. Tetramer of two alpha and two beta subunits.

It localises to the cytoplasm. The catalysed reaction is tRNA(Gly) + glycine + ATP = glycyl-tRNA(Gly) + AMP + diphosphate. This chain is Glycine--tRNA ligase beta subunit, found in Magnetococcus marinus (strain ATCC BAA-1437 / JCM 17883 / MC-1).